The primary structure comprises 244 residues: Ribosomal RNA small subunit methyltransferase NEP1 (244 aa).

A disordered region spans residues 1 to 34 (MAAPSDGFKPRERSGGEQAQDWDALPPKRPRLGA). Residue Ala-2 is modified to N-acetylalanine. Residues Ser-5 and Ser-14 each carry the phosphoserine modification. Residues Thr-176, Gly-201, Gly-206, and 219-224 (ISNYPL) each bind S-adenosyl-L-methionine.

It belongs to the class IV-like SAM-binding methyltransferase superfamily. RNA methyltransferase NEP1 family. Homodimer. Part of the small subunit (SSU) processome, composed of more than 70 proteins and the RNA chaperone small nucleolar RNA (snoRNA) U3.

It is found in the nucleus. The protein resides in the nucleolus. It carries out the reaction pseudouridine(1248) in human 18S rRNA + S-adenosyl-L-methionine = N(1)-methylpseudouridine(1248) in human 18S rRNA + S-adenosyl-L-homocysteine + H(+). S-adenosyl-L-methionine-dependent pseudouridine N(1)-methyltransferase that methylates pseudouridine at position 1248 (Psi1248) in 18S rRNA. Involved the biosynthesis of the hypermodified N1-methyl-N3-(3-amino-3-carboxypropyl) pseudouridine (m1acp3-Psi) conserved in eukaryotic 18S rRNA. Is not able to methylate uridine at this position. Also has an essential role in 40S ribosomal subunit biogenesis independent on its methyltransferase activity, facilitating the incorporation of ribosomal protein S19 during the formation of pre-ribosomes. Part of the small subunit (SSU) processome, first precursor of the small eukaryotic ribosomal subunit. During the assembly of the SSU processome in the nucleolus, many ribosome biogenesis factors, an RNA chaperone and ribosomal proteins associate with the nascent pre-rRNA and work in concert to generate RNA folding, modifications, rearrangements and cleavage as well as targeted degradation of pre-ribosomal RNA by the RNA exosome. In Homo sapiens (Human), this protein is Ribosomal RNA small subunit methyltransferase NEP1.